The chain runs to 372 residues: tRNA-specific 2-thiouridylase MnmA (372 aa).

Residues 16 to 23 and M42 contribute to the ATP site; that span reads GMSGGVDS. Positions 102–104 are interaction with target base in tRNA; the sequence is NPD. C107 acts as the Nucleophile in catalysis. A disulfide bridge connects residues C107 and C205. G132 is an ATP binding site. The interval 155-157 is interaction with tRNA; it reads KDQ. The active-site Cysteine persulfide intermediate is the C205. An interaction with tRNA region spans residues 317–318; the sequence is RY.

This sequence belongs to the MnmA/TRMU family.

The protein localises to the cytoplasm. It catalyses the reaction S-sulfanyl-L-cysteinyl-[protein] + uridine(34) in tRNA + AH2 + ATP = 2-thiouridine(34) in tRNA + L-cysteinyl-[protein] + A + AMP + diphosphate + H(+). Functionally, catalyzes the 2-thiolation of uridine at the wobble position (U34) of tRNA, leading to the formation of s(2)U34. The protein is tRNA-specific 2-thiouridylase MnmA of Shewanella oneidensis (strain ATCC 700550 / JCM 31522 / CIP 106686 / LMG 19005 / NCIMB 14063 / MR-1).